Here is a 66-residue protein sequence, read N- to C-terminus: Phylloseptin-S2 (66 aa).

Positions 1 to 22 (MAFLKKSLFLVLFLGLVSLSIC) are cleaved as a signal peptide. A propeptide spanning residues 23–46 (EEEKRETEEEEHDQEEDDKSEEKR) is cleaved from the precursor. Positions 25–44 (EKRETEEEEHDQEEDDKSEE) are disordered. Residues 30–41 (EEEEHDQEEDDK) show a composition bias toward acidic residues. Position 65 is a phenylalanine amide (Phe65).

As to expression, expressed by the skin glands.

Its subcellular location is the secreted. It localises to the target cell membrane. Antimicrobial peptide with high activity against Gram-positive bacteria, moderate activity against Gram-negative bacteria, and moderate activity against fungi. Acts by causing bacterial membrane disruption inducing leakage of the intracellular content followed by cell death. It adopts an alpha-helical amphipathic structure in membrane environments. Also shows highly potent antiparasitic activity against Leishmania species. Shows moderate hemolytic activity on human erythrocytes (LC(50)=25 uM). Is also active on human monocytes (IC(50)=22.5 uM). This is Phylloseptin-S2 from Phyllomedusa sauvagei (Sauvage's leaf frog).